Reading from the N-terminus, the 410-residue chain is Tegument protein VP16 homolog (410 aa).

The segment at 388 to 410 is disordered; it reads PPSPSEILPGDPPRPPTCGFLTR.

This sequence belongs to the herpesviridae tegument protein VP16 protein family. As to quaternary structure, associates with the VP16-induced complex; binding to host HCFC1 activates VP16 for association with the octamer motif-binding host protein POU2F1, to form a multiprotein-DNA complex responsible for activating transcription of the viral immediate early genes.

It localises to the virion tegument. It is found in the host nucleus. Functionally, transcriptional activator of immediate-early (IE) gene products (alpha genes). Acts as a key activator of lytic infection by initiating the lytic program through the assembly of the transcriptional regulatory VP16-induced complex composed of VP16 and two cellular factors, HCFC1 and POU2F 1. VP16-induced complex represents a regulatory switch: when it is on, it promotes IE-gene expression and thus lytic infection, and when it is off, it limits IE-gene transcription favoring latent infection. In terms of biological role, may play a role in the aggregation of tegument proteins around nucleocapsids during virus morphogenesis. In Varicella-zoster virus (strain Oka vaccine) (HHV-3), this protein is Tegument protein VP16 homolog.